Consider the following 509-residue polypeptide: Cytochrome P450 4A10 (509 aa).

Transmembrane regions (helical) follow at residues 15-35 (LSGFLQVASVLGLLLLLVKAV) and 121-141 (LLAPWIGYGLLLLNGQPWFQH). Glu-320 is a heme binding site. Phosphoserine is present on Ser-439. Cys-456 contributes to the heme binding site.

It belongs to the cytochrome P450 family. The cofactor is heme. As to expression, highly expressed in the kidneys of both genders.

It is found in the endoplasmic reticulum membrane. It localises to the microsome membrane. It carries out the reaction an omega-methyl-long-chain fatty acid + reduced [NADPH--hemoprotein reductase] + O2 = an omega-hydroxy-long-chain fatty acid + oxidized [NADPH--hemoprotein reductase] + H2O + H(+). The catalysed reaction is dodecanoate + reduced [NADPH--hemoprotein reductase] + O2 = 12-hydroxydodecanoate + oxidized [NADPH--hemoprotein reductase] + H2O + H(+). It catalyses the reaction dodecanoate + reduced [NADPH--hemoprotein reductase] + O2 = 11-hydroxydodecanoate + oxidized [NADPH--hemoprotein reductase] + H2O + H(+). The enzyme catalyses tetradecanoate + reduced [NADPH--hemoprotein reductase] + O2 = 14-hydroxytetradecanoate + oxidized [NADPH--hemoprotein reductase] + H2O + H(+). It carries out the reaction hexadecanoate + reduced [NADPH--hemoprotein reductase] + O2 = 16-hydroxyhexadecanoate + oxidized [NADPH--hemoprotein reductase] + H2O + H(+). The catalysed reaction is (9Z)-octadecenoate + reduced [NADPH--hemoprotein reductase] + O2 = 18-hydroxy-(9Z)-octadecenoate + oxidized [NADPH--hemoprotein reductase] + H2O + H(+). It catalyses the reaction (9Z,12Z)-octadecadienoate + reduced [NADPH--hemoprotein reductase] + O2 = 18-hydroxy-(9Z,12Z)-octadecadienoate + oxidized [NADPH--hemoprotein reductase] + H2O + H(+). The enzyme catalyses (9Z,12Z)-octadecadienoate + reduced [NADPH--hemoprotein reductase] + O2 = 17-hydroxy-(9Z,12Z)-octadecadienoate + oxidized [NADPH--hemoprotein reductase] + H2O + H(+). It carries out the reaction (5Z,8Z,11Z,14Z)-eicosatetraenoate + reduced [NADPH--hemoprotein reductase] + O2 = 20-hydroxy-(5Z,8Z,11Z,14Z)-eicosatetraenoate + oxidized [NADPH--hemoprotein reductase] + H2O + H(+). The catalysed reaction is 8,9-epoxy-(5Z,11Z,14Z)-eicosatrienoate + reduced [NADPH--hemoprotein reductase] + O2 = 20-hydroxy-8,9-epoxy-(5Z,11Z,14Z)-eicosatrienoate + oxidized [NADPH--hemoprotein reductase] + H2O + H(+). Its function is as follows. A cytochrome P450 monooxygenase involved in the metabolism of fatty acids. Catalyzes predominantly the oxidation of the terminal carbon (omega-oxidation) of long-chain fatty acids. Acts as a major omega-hydroxylase for dodecanoic (lauric) acid in liver. In kidney, may play an important role in omega-hydroxylation of (5Z,8Z,11Z,14Z)-eicosatetraenoic acid (arachidonate) to 20-hydroxyeicosatetraenoic acid (20-HETE), a signaling molecule acting both as vasoconstrictive and natriuretic with overall effect on arterial blood pressure. Also participates in the formation of anti-inflammatory hydroxyepoxyeicosatrienoic acids (HEETs) in kidney by converting 8,9-epoxyeicosatrienoic acid (EET) to 20,8,9-HEET, an activator of PPARA. Displays substantially lower fatty acid omega-1 hydroxylase activity. Mechanistically, uses molecular oxygen inserting one oxygen atom into a substrate, and reducing the second into a water molecule, with two electrons provided by NADPH via cytochrome P450 reductase (CPR; NADPH-ferrihemoprotein reductase). This Mus musculus (Mouse) protein is Cytochrome P450 4A10.